Consider the following 509-residue polypeptide: Maturase K (509 aa).

The protein belongs to the intron maturase 2 family. MatK subfamily.

It localises to the plastid. Its subcellular location is the chloroplast. Usually encoded in the trnK tRNA gene intron. Probably assists in splicing its own and other chloroplast group II introns. In Nicotiana plumbaginifolia (Leadwort-leaved tobacco), this protein is Maturase K.